The chain runs to 526 residues: Beta,beta-carotene 15,15'-dioxygenase (526 aa).

Fe cation contacts are provided by His172, His236, His307, and His512.

The protein belongs to the carotenoid oxygenase family. Requires Fe(2+) as cofactor.

The protein localises to the cytoplasm. Its subcellular location is the cytosol. The enzyme catalyses all-trans-beta-carotene + O2 = 2 all-trans-retinal. Its pathway is cofactor metabolism; retinol metabolism. Symmetrically cleaves beta-carotene into two molecules of retinal using a dioxygenase mechanism. This chain is Beta,beta-carotene 15,15'-dioxygenase, found in Gallus gallus (Chicken).